A 549-amino-acid polypeptide reads, in one-letter code: Glucose-6-phosphate isomerase (549 aa).

N6-acetyllysine is present on residues lysine 80, lysine 228, and lysine 234. Glutamate 355 serves as the catalytic Proton donor. Active-site residues include histidine 386 and lysine 514.

The protein belongs to the GPI family.

Its subcellular location is the cytoplasm. It carries out the reaction alpha-D-glucose 6-phosphate = beta-D-fructose 6-phosphate. The protein operates within carbohydrate biosynthesis; gluconeogenesis. Its pathway is carbohydrate degradation; glycolysis; D-glyceraldehyde 3-phosphate and glycerone phosphate from D-glucose: step 2/4. Catalyzes the reversible isomerization of glucose-6-phosphate to fructose-6-phosphate. The protein is Glucose-6-phosphate isomerase of Shigella boydii serotype 4 (strain Sb227).